The sequence spans 742 residues: Clamp-binding protein CrfC (742 aa).

Residues 41–45 (QLALP) form a clamp-binding consensus region. Positions 66-402 (SRLEMVLAIV…LWEDSLFAQP (337 aa)) constitute a Dynamin-type G domain. Residues 76–83 (GTMKAGKS) are G1 motif. Residues 102-104 (MTA) are G2 motif. The G3 motif stretch occupies residues 236-239 (DTPG). The interval 297 to 300 (NKFD) is G4 motif. The G5 motif stretch occupies residues 331-334 (FPVS). The stretch at 440–472 (RAHGLNVACEQLRQNIHQVEESLQLLQLNQAQV) forms a coiled coil.

This sequence belongs to the TRAFAC class dynamin-like GTPase superfamily. Dynamin/Fzo/YdjA family. Forms homooligomers. Binds to the beta sliding clamp processivity factor (DnaN) in the presence and absence of DNA, may bind to the clamp itself as homodimers or trimers. Homooligomers may be able to bind more than 1 clamp complex.

The protein resides in the cytoplasm. Its function is as follows. Important for the colocalization of sister nascent DNA strands after replication fork passage during DNA replication, and for positioning and subsequent partitioning of sister chromosomes. Does not have GTPase activity on its own. The polypeptide is Clamp-binding protein CrfC (crfC) (Escherichia coli).